The primary structure comprises 678 residues: Mitogen-activated protein kinase kinase kinase 7 (678 aa).

The 253-residue stretch at 19-271 (ITLREKVGHG…YIVGVMHEIV (253 aa)) folds into the Protein kinase domain. Residues 25 to 33 (VGHGSYGVV) and Lys-46 contribute to the ATP site. Catalysis depends on Asp-140, which acts as the Proton acceptor. Disordered regions lie at residues 296 to 322 (DGTV…QLTP), 339 to 365 (TTSS…LDNN), 431 to 455 (DLSP…LTVT), and 616 to 647 (QLAA…HFLQ). Composition is skewed to low complexity over residues 313–322 (LSPSSTQLTP) and 339–352 (TTSS…STSS). Over residues 353–364 (DITPTNSGQLDN) the composition is skewed to polar residues.

This sequence belongs to the protein kinase superfamily. STE Ser/Thr protein kinase family. MAP kinase kinase kinase subfamily. The cofactor is Mg(2+).

The catalysed reaction is L-seryl-[protein] + ATP = O-phospho-L-seryl-[protein] + ADP + H(+). It carries out the reaction L-threonyl-[protein] + ATP = O-phospho-L-threonyl-[protein] + ADP + H(+). Functionally, component of a protein kinase signal transduction cascade. Mediator of TGF-beta signal transduction. Responsible for activation of the JNK MAPK pathway (basket, bsk and hemipterous, hep) in response to LPS. Component of the NF-kappa-B pathway; relish-mediated JNK inhibition involves proteasomal degradation of Tak1; certain targets of Relish that are induced during immune responses may facilitate destruction of Tak1 and switch off the JNK cascade. Participates in diverse roles such as control of cell shape and regulation of apoptosis. The sequence is that of Mitogen-activated protein kinase kinase kinase 7 (Tak1) from Drosophila melanogaster (Fruit fly).